We begin with the raw amino-acid sequence, 222 residues long: Putative N-acetylmannosamine-6-phosphate 2-epimerase (222 aa).

Belongs to the NanE family.

The catalysed reaction is an N-acyl-D-glucosamine 6-phosphate = an N-acyl-D-mannosamine 6-phosphate. It participates in amino-sugar metabolism; N-acetylneuraminate degradation; D-fructose 6-phosphate from N-acetylneuraminate: step 3/5. Its function is as follows. Converts N-acetylmannosamine-6-phosphate (ManNAc-6-P) to N-acetylglucosamine-6-phosphate (GlcNAc-6-P). The polypeptide is Putative N-acetylmannosamine-6-phosphate 2-epimerase (Staphylococcus aureus (strain USA300)).